Here is a 274-residue protein sequence, read N- to C-terminus: 2,3,4,5-tetrahydropyridine-2,6-dicarboxylate N-succinyltransferase (274 aa).

The substrate site is built by Arg107 and Asp144.

Belongs to the transferase hexapeptide repeat family. In terms of assembly, homotrimer.

Its subcellular location is the cytoplasm. It catalyses the reaction (S)-2,3,4,5-tetrahydrodipicolinate + succinyl-CoA + H2O = (S)-2-succinylamino-6-oxoheptanedioate + CoA. The protein operates within amino-acid biosynthesis; L-lysine biosynthesis via DAP pathway; LL-2,6-diaminopimelate from (S)-tetrahydrodipicolinate (succinylase route): step 1/3. The sequence is that of 2,3,4,5-tetrahydropyridine-2,6-dicarboxylate N-succinyltransferase from Cereibacter sphaeroides (strain ATCC 17025 / ATH 2.4.3) (Rhodobacter sphaeroides).